The primary structure comprises 354 residues: Period circadian protein (354 aa).

PAS domains lie at 1-55 and 133-235; these read GIVM…VNGQ and FVMR…HIIE. Positions 318-354 are disordered; the sequence is IQDPDHSYYQRDSVMLGGISPHHDYNDSKSSTGTPLS. Residues 345–354 show a composition bias toward polar residues; sequence SKSSTGTPLS.

As to quaternary structure, forms a heterodimer with timeless (TIM); the complex then translocates into the nucleus. Post-translationally, phosphorylated with a circadian rhythmicity.

The protein resides in the nucleus. Functionally, involved in the generation of biological rhythms. The biological cycle depends on the rhythmic formation and nuclear localization of the tim-per complex. Light induces the degradation of tim, which promotes elimination of per. Nuclear activity of the heterodimer coordinatively regulates per and tim transcription negative feedback loop. Behaves as a negative element in circadian transcriptional loop. Does not appear to bind DNA, suggesting indirect transcriptional inhibition. This Manduca sexta (Tobacco hawkmoth) protein is Period circadian protein (per).